Reading from the N-terminus, the 186-residue chain is ATP synthase subunit delta (186 aa).

The protein belongs to the ATPase delta chain family. As to quaternary structure, F-type ATPases have 2 components, F(1) - the catalytic core - and F(0) - the membrane proton channel. F(1) has five subunits: alpha(3), beta(3), gamma(1), delta(1), epsilon(1). F(0) has three main subunits: a(1), b(2) and c(10-14). The alpha and beta chains form an alternating ring which encloses part of the gamma chain. F(1) is attached to F(0) by a central stalk formed by the gamma and epsilon chains, while a peripheral stalk is formed by the delta and b chains.

It is found in the cell inner membrane. In terms of biological role, f(1)F(0) ATP synthase produces ATP from ADP in the presence of a proton or sodium gradient. F-type ATPases consist of two structural domains, F(1) containing the extramembraneous catalytic core and F(0) containing the membrane proton channel, linked together by a central stalk and a peripheral stalk. During catalysis, ATP synthesis in the catalytic domain of F(1) is coupled via a rotary mechanism of the central stalk subunits to proton translocation. Functionally, this protein is part of the stalk that links CF(0) to CF(1). It either transmits conformational changes from CF(0) to CF(1) or is implicated in proton conduction. This chain is ATP synthase subunit delta, found in Fuscovulum blasticum (Rhodobacter blasticus).